Here is a 363-residue protein sequence, read N- to C-terminus: Phosrestin-2 (363 aa).

Belongs to the arrestin family.

In Calliphora vicina (Blue blowfly), this protein is Phosrestin-2 (ARR1).